The chain runs to 163 residues: NADH-quinone oxidoreductase subunit 9 (163 aa).

2 4Fe-4S ferredoxin-type domains span residues 54–84 and 94–123; these read LRRYPNGEERCIACKLCEAVCPAQAITIDAE and TRYDIDMTKCIYCGFCQEACPVDAIVEGPN. The [4Fe-4S] cluster site is built by C64, C67, C70, C74, C103, C106, C109, and C113.

It belongs to the complex I 23 kDa subunit family. NDH-1 is composed of at least 14 different subunits, Nqo1 to Nqo14. The complex has a L-shaped structure, with the hydrophobic arm (subunits Nqo7, Nqo8, Nqo10 to Nqo14) embedded in the inner membrane and the hydrophilic peripheral arm (subunits Nqo1 to Nqo6, Nqo9) protruding into the bacterial cytoplasm. The hydrophilic domain contains all the redox centers. [4Fe-4S] cluster is required as a cofactor.

It is found in the cell inner membrane. The catalysed reaction is a quinone + NADH + 5 H(+)(in) = a quinol + NAD(+) + 4 H(+)(out). NDH-1 shuttles electrons from NADH, via FMN and iron-sulfur (Fe-S) centers, to quinones in the respiratory chain. The immediate electron acceptor for the enzyme in this species is believed to be ubiquinone. Couples the redox reaction to proton translocation (for every two electrons transferred, four hydrogen ions are translocated across the cytoplasmic membrane), and thus conserves the redox energy in a proton gradient. This chain is NADH-quinone oxidoreductase subunit 9, found in Paracoccus denitrificans.